The sequence spans 261 residues: NAD-capped RNA hydrolase NudC (261 aa).

R69 is a substrate binding site. Zn(2+) is bound by residues C98 and C101. Position 111 (E111) interacts with substrate. C116 and C119 together coordinate Zn(2+). Y124 lines the substrate pocket. One can recognise a Nudix hydrolase domain in the interval 125 to 248 (PQIAPCIIVA…TVARRLIEDT (124 aa)). A158, E174, and E178 together coordinate a divalent metal cation. The Nudix box motif lies at 159 to 180 (GFVEVGETLEQTVAREVMEESS). Residue 192–199 (QPWPFPQS) coordinates substrate. E219 serves as a coordination point for a divalent metal cation. Substrate is bound at residue A241.

It belongs to the Nudix hydrolase family. NudC subfamily. As to quaternary structure, homodimer. Requires Mg(2+) as cofactor. Mn(2+) is required as a cofactor. It depends on Zn(2+) as a cofactor.

The catalysed reaction is a 5'-end NAD(+)-phospho-ribonucleoside in mRNA + H2O = a 5'-end phospho-adenosine-phospho-ribonucleoside in mRNA + beta-nicotinamide D-ribonucleotide + 2 H(+). The enzyme catalyses NAD(+) + H2O = beta-nicotinamide D-ribonucleotide + AMP + 2 H(+). It carries out the reaction NADH + H2O = reduced beta-nicotinamide D-ribonucleotide + AMP + 2 H(+). In terms of biological role, mRNA decapping enzyme that specifically removes the nicotinamide adenine dinucleotide (NAD) cap from a subset of mRNAs by hydrolyzing the diphosphate linkage to produce nicotinamide mononucleotide (NMN) and 5' monophosphate mRNA. The NAD-cap is present at the 5'-end of some mRNAs and stabilizes RNA against 5'-processing. Has preference for mRNAs with a 5'-end purine. Catalyzes the hydrolysis of a broad range of dinucleotide pyrophosphates. This chain is NAD-capped RNA hydrolase NudC, found in Erwinia tasmaniensis (strain DSM 17950 / CFBP 7177 / CIP 109463 / NCPPB 4357 / Et1/99).